The sequence spans 180 residues: ATP-dependent protease subunit HslV (180 aa).

Thr-5 is a catalytic residue. Na(+) contacts are provided by Gly-161, Cys-164, and Thr-167.

This sequence belongs to the peptidase T1B family. HslV subfamily. In terms of assembly, a double ring-shaped homohexamer of HslV is capped on each side by a ring-shaped HslU homohexamer. The assembly of the HslU/HslV complex is dependent on binding of ATP.

The protein localises to the cytoplasm. The catalysed reaction is ATP-dependent cleavage of peptide bonds with broad specificity.. Its activity is regulated as follows. Allosterically activated by HslU binding. Functionally, protease subunit of a proteasome-like degradation complex believed to be a general protein degrading machinery. This is ATP-dependent protease subunit HslV from Campylobacter lari (strain RM2100 / D67 / ATCC BAA-1060).